Consider the following 215-residue polypeptide: Pyridoxine/pyridoxamine 5'-phosphate oxidase (215 aa).

Residues 9 to 12 and Lys-69 each bind substrate; that span reads RRDY. Residues 64 to 69, 79 to 80, Lys-86, and Gln-108 each bind FMN; these read RVLLLK and FT. 3 residues coordinate substrate: Tyr-126, Arg-130, and Ser-134. Residues 143–144 and Trp-188 contribute to the FMN site; that span reads QS. 194-196 contributes to the substrate binding site; the sequence is RLH. Arg-198 provides a ligand contact to FMN.

This sequence belongs to the pyridoxamine 5'-phosphate oxidase family. In terms of assembly, homodimer. FMN serves as cofactor.

It catalyses the reaction pyridoxamine 5'-phosphate + O2 + H2O = pyridoxal 5'-phosphate + H2O2 + NH4(+). The enzyme catalyses pyridoxine 5'-phosphate + O2 = pyridoxal 5'-phosphate + H2O2. Its pathway is cofactor metabolism; pyridoxal 5'-phosphate salvage; pyridoxal 5'-phosphate from pyridoxamine 5'-phosphate: step 1/1. The protein operates within cofactor metabolism; pyridoxal 5'-phosphate salvage; pyridoxal 5'-phosphate from pyridoxine 5'-phosphate: step 1/1. In terms of biological role, catalyzes the oxidation of either pyridoxine 5'-phosphate (PNP) or pyridoxamine 5'-phosphate (PMP) into pyridoxal 5'-phosphate (PLP). The protein is Pyridoxine/pyridoxamine 5'-phosphate oxidase of Pseudomonas savastanoi pv. phaseolicola (strain 1448A / Race 6) (Pseudomonas syringae pv. phaseolicola (strain 1448A / Race 6)).